A 376-amino-acid polypeptide reads, in one-letter code: Sulfate/thiosulfate import ATP-binding protein CysA (376 aa).

In terms of domain architecture, ABC transporter spans 3–237; it reads IRLDNISKHF…PNSRFVFDFF (235 aa). 35–42 serves as a coordination point for ATP; it reads GPSGSGKT.

It belongs to the ABC transporter superfamily. Sulfate/tungstate importer (TC 3.A.1.6) family. The complex is composed of two ATP-binding proteins (CysA), two transmembrane proteins (CysT and CysW) and a solute-binding protein (CysP).

It is found in the cell inner membrane. It catalyses the reaction sulfate(out) + ATP + H2O = sulfate(in) + ADP + phosphate + H(+). The catalysed reaction is thiosulfate(out) + ATP + H2O = thiosulfate(in) + ADP + phosphate + H(+). Functionally, part of the ABC transporter complex CysAWTP involved in sulfate/thiosulfate import. Responsible for energy coupling to the transport system. In Vibrio cholerae serotype O1 (strain ATCC 39315 / El Tor Inaba N16961), this protein is Sulfate/thiosulfate import ATP-binding protein CysA.